Consider the following 129-residue polypeptide: uncharacterized protein (129 aa).

To M.pneumoniae MPN_376 N-terminal region.

This is an uncharacterized protein from Mycoplasma pneumoniae (strain ATCC 29342 / M129 / Subtype 1) (Mycoplasmoides pneumoniae).